Here is a 118-residue protein sequence, read N- to C-terminus: NADH-ubiquinone oxidoreductase chain 3 (118 aa).

Helical transmembrane passes span 9 to 29 (IYLVISLLVSLILLGVPFLFA), 62 to 82 (LVSILFIIFDLEVTFFFPWAV), and 87 to 107 (IDLFGFWSMMAFLLILTIGFL).

It belongs to the complex I subunit 3 family.

It is found in the mitochondrion membrane. The enzyme catalyses a ubiquinone + NADH + 5 H(+)(in) = a ubiquinol + NAD(+) + 4 H(+)(out). Functionally, core subunit of the mitochondrial membrane respiratory chain NADH dehydrogenase (Complex I) that is believed to belong to the minimal assembly required for catalysis. Complex I functions in the transfer of electrons from NADH to the respiratory chain. The immediate electron acceptor for the enzyme is believed to be ubiquinone. The chain is NADH-ubiquinone oxidoreductase chain 3 (ND3) from Triticum aestivum (Wheat).